We begin with the raw amino-acid sequence, 239 residues long: DnaA regulatory inactivator Hda (239 aa).

The protein belongs to the DnaA family. HdA subfamily. As to quaternary structure, the active form seems to be an ADP-bound monomer. Forms the RIDA complex (regulatory inactivation of DnaA) of ATP-DnaA, ADP-Hda and the DNA-loaded beta sliding clamp (dnaN).

Its function is as follows. Mediates the interaction of DNA replication initiator protein DnaA with DNA polymerase subunit beta sliding clamp (dnaN). Stimulates hydrolysis of ATP-DnaA to ADP-DnaA, rendering DnaA inactive for reinitiation, a process called regulatory inhibition of DnaA or RIDA. The polypeptide is DnaA regulatory inactivator Hda (Yersinia pseudotuberculosis serotype O:1b (strain IP 31758)).